Consider the following 1279-residue polypeptide: ATP-dependent helicase/nuclease subunit A (1279 aa).

The region spanning 4-499 (TKWTDEQRQA…VKLFKNFRSR (496 aa)) is the UvrD-like helicase ATP-binding domain. Residue 25 to 32 (AGAGAGKT) coordinates ATP. Positions 526 to 853 (EEALKVGASY…RIMSIHKSKG (328 aa)) constitute a UvrD-like helicase C-terminal domain.

It belongs to the helicase family. AddA subfamily. As to quaternary structure, heterodimer of AddA and AddB/RexB. Requires Mg(2+) as cofactor.

It catalyses the reaction Couples ATP hydrolysis with the unwinding of duplex DNA by translocating in the 3'-5' direction.. The catalysed reaction is ATP + H2O = ADP + phosphate + H(+). Functionally, the heterodimer acts as both an ATP-dependent DNA helicase and an ATP-dependent, dual-direction single-stranded exonuclease. Recognizes the chi site generating a DNA molecule suitable for the initiation of homologous recombination. The AddA nuclease domain is required for chi fragment generation; this subunit has the helicase and 3' -&gt; 5' nuclease activities. This is ATP-dependent helicase/nuclease subunit A from Clostridium botulinum (strain Loch Maree / Type A3).